The primary structure comprises 1017 residues: Sodium/potassium-transporting ATPase subunit alpha-2 (1017 aa).

The disordered stretch occupies residues 1-31 (MDGREYSPAATTSENGGGRRKQKEKELDELK). Residues 1-82 (MDGREYSPAA…NALTPPPTTP (82 aa)) are Cytoplasmic-facing. An interaction with phosphoinositide-3 kinase region spans residues 77–79 (PPP). The chain crosses the membrane as a helical span at residues 83–103 (EWVKFCRQLFGGFSILLWIGA). The Extracellular portion of the chain corresponds to 104–126 (ILCFLAYGIQAAMEDEPSNDNLY). A helical membrane pass occupies residues 127–147 (LGVVLAAVVIVTGCFSYYQEA). At 148–283 (KSSKIMDSFK…VGRTPIAMEI (136 aa)) the chain is on the cytoplasmic side. Residues 207–228 (KVDNSSLTGESEPQTRSPEFTH) form a disordered region. Positions 209–224 (DNSSLTGESEPQTRSP) are enriched in polar residues. The helical transmembrane segment at 284-303 (EHFIRLITGVAVFLGLSFFI) threads the bilayer. Over 304–315 (LSLILGYTWLEA) the chain is Extracellular. A helical membrane pass occupies residues 316–333 (VIFLIGIIVANVPEGLLA). The Cytoplasmic segment spans residues 334-766 (TVTVCLTLTA…EEGRLIFDNL (433 aa)). Catalysis depends on Asp-371, which acts as the 4-aspartylphosphate intermediate. Lys-502 is a binding site for ATP. Positions 711 and 715 each coordinate Mg(2+). Residues 767–786 (KKSIAYTLTSNIPEITPFLL) form a helical membrane-spanning segment. Residues 787–796 (FIIANIPLPL) lie on the Extracellular side of the membrane. Residues 797–817 (GTVTILCIDLGTDMVPAISLA) traverse the membrane as a helical segment. Residues 818–837 (YEAAESDIMKRQPRNPRTDK) are Cytoplasmic-facing. Residues 838–860 (LVNERLISMAYGQIGMIQALGGF) traverse the membrane as a helical segment. The Extracellular portion of the chain corresponds to 861–912 (FTYFVILAENGFLPARLLGVRLAWDDRSTNDLEDSYGQEWTYEQRKVVEFTC). The helical transmembrane segment at 913–932 (HTAFFASIVVVQWADLIICK) threads the bilayer. Residues 933-945 (TRRNSVFQQGMKN) lie on the Cytoplasmic side of the membrane. Ser-937 carries the post-translational modification Phosphoserine; by PKA. Residues 946–964 (KILIFGLLEETALAAFLSY) traverse the membrane as a helical segment. Topologically, residues 965-979 (CPGMGVALRMYPLKV) are extracellular. A helical transmembrane segment spans residues 980–1000 (TWWFCAFPYSLLIFAYDEVRK). Topologically, residues 1001 to 1017 (LILRRYPGGWVEKETYY) are cytoplasmic.

It belongs to the cation transport ATPase (P-type) (TC 3.A.3) family. Type IIC subfamily. In terms of assembly, the sodium/potassium-transporting ATPase is composed of a catalytic alpha subunit, an auxiliary non-catalytic beta subunit and an additional regulatory subunit.

The protein localises to the membrane. It localises to the cell membrane. The enzyme catalyses K(+)(out) + Na(+)(in) + ATP + H2O = K(+)(in) + Na(+)(out) + ADP + phosphate + H(+). This is the catalytic component of the active enzyme, which catalyzes the hydrolysis of ATP coupled with the exchange of sodium and potassium ions across the plasma membrane. This action creates the electrochemical gradient of sodium and potassium ions, providing the energy for active transport of various nutrients. This is Sodium/potassium-transporting ATPase subunit alpha-2 (ATP1A2) from Gallus gallus (Chicken).